Consider the following 332-residue polypeptide: Ketol-acid reductoisomerase (NADP(+)) 1 (332 aa).

The KARI N-terminal Rossmann domain maps to 2 to 182; it reads AELFYDADAD…GGTRAGVIKT (181 aa). Residues 25–28, serine 51, serine 53, and 83–86 each bind NADP(+); these read YGSQ and DPIQ. Histidine 108 is a catalytic residue. Position 134 (glycine 134) interacts with NADP(+). The 146-residue stretch at 183 to 328 folds into the KARI C-terminal knotted domain; that stretch reads TFTEETETDL…KELRKLMSWV (146 aa). 4 residues coordinate Mg(2+): aspartate 191, glutamate 195, glutamate 227, and glutamate 231. Serine 252 lines the substrate pocket.

The protein belongs to the ketol-acid reductoisomerase family. Mg(2+) is required as a cofactor.

The catalysed reaction is (2R)-2,3-dihydroxy-3-methylbutanoate + NADP(+) = (2S)-2-acetolactate + NADPH + H(+). The enzyme catalyses (2R,3R)-2,3-dihydroxy-3-methylpentanoate + NADP(+) = (S)-2-ethyl-2-hydroxy-3-oxobutanoate + NADPH + H(+). It participates in amino-acid biosynthesis; L-isoleucine biosynthesis; L-isoleucine from 2-oxobutanoate: step 2/4. It functions in the pathway amino-acid biosynthesis; L-valine biosynthesis; L-valine from pyruvate: step 2/4. Functionally, involved in the biosynthesis of branched-chain amino acids (BCAA). Catalyzes an alkyl-migration followed by a ketol-acid reduction of (S)-2-acetolactate (S2AL) to yield (R)-2,3-dihydroxy-isovalerate. In the isomerase reaction, S2AL is rearranged via a Mg-dependent methyl migration to produce 3-hydroxy-3-methyl-2-ketobutyrate (HMKB). In the reductase reaction, this 2-ketoacid undergoes a metal-dependent reduction by NADPH to yield (R)-2,3-dihydroxy-isovalerate. The chain is Ketol-acid reductoisomerase (NADP(+)) 1 from Streptomyces coelicolor (strain ATCC BAA-471 / A3(2) / M145).